The primary structure comprises 511 residues: Sporulation-specific chitinase 2 (511 aa).

The N-terminal stretch at 1–34 is a signal peptide; that stretch reads MVGHSAQHRSKSSLVSHLLILLIFITIIIEMCLY. In terms of domain architecture, GH18 spans 73–472; the sequence is FISGVYYSNW…NAFNEGLHFN (400 aa). An N-linked (GlcNAc...) asparagine glycan is attached at asparagine 147. Glutamate 223 acts as the Proton donor in catalysis. Residues asparagine 228, asparagine 456, and asparagine 472 are each glycosylated (N-linked (GlcNAc...) asparagine).

Belongs to the glycosyl hydrolase 18 family. Chitinase class III subfamily.

Its subcellular location is the secreted. The catalysed reaction is Random endo-hydrolysis of N-acetyl-beta-D-glucosaminide (1-&gt;4)-beta-linkages in chitin and chitodextrins.. The sequence is that of Sporulation-specific chitinase 2 (CTS2) from Saccharomyces cerevisiae (strain ATCC 204508 / S288c) (Baker's yeast).